We begin with the raw amino-acid sequence, 271 residues long: MKRTAFFISDGTGLTAEALGHALLAQFEKIEFERVTVPYIDDEEKARDLVSRINKASEIDGERPLVFDTIVNGGIREIISRADGFMVDIFGTFLNPLEQELNSSSSYSVGKSHSINNAGSYERRIHAVNFALDNDDGARTRHYDEADLILIGASRSGKTPTCLYLALQYGIKAANYPITEEDLDDQKMPAALRPHKEKLFGLTIEPERLATIRNERRPNSRYSSLQQCMHEIEEIELMYKRERIPYLNTTAYSVEEISTRIMVTTGLKRHR.

Position 152 to 159 (152 to 159 (GASRSGKT)) interacts with ADP.

It belongs to the pyruvate, phosphate/water dikinase regulatory protein family. PSRP subfamily.

It catalyses the reaction [pyruvate, water dikinase] + ADP = [pyruvate, water dikinase]-phosphate + AMP + H(+). The enzyme catalyses [pyruvate, water dikinase]-phosphate + phosphate + H(+) = [pyruvate, water dikinase] + diphosphate. Its function is as follows. Bifunctional serine/threonine kinase and phosphorylase involved in the regulation of the phosphoenolpyruvate synthase (PEPS) by catalyzing its phosphorylation/dephosphorylation. The protein is Putative phosphoenolpyruvate synthase regulatory protein of Marinobacter nauticus (strain ATCC 700491 / DSM 11845 / VT8) (Marinobacter aquaeolei).